Consider the following 446-residue polypeptide: MAASPISLDPSHVGIIKVANIPSDSLTECNKLLMKNHEEYHMFFRDTAGHNHIVHSLLTILSLGASPKQLQDRYDDGIPIQRPIPKIDHELLEKLSDPEILLKTIGEITQYHTLLEFFKREIAAKGWKEAIQEYVLARTKIADTILARMYEGAYHPIIHLGLGIEFQQPIIVAEALAQAASHDNSNIGTLFHNAEAEAGISYPSRIPKPMIELINEVRANETIRTAPRWTDFGNKMRDGVVGRAGEAMASLAAQFRIRNDEEELKRSTAEMISTCAFFAGASQHEGRKKKIDFFYMHNVTSSLFFTVFIRQDWIKLEDRVRLVEWKARLDLAWYAVSGSAALDAKWISDYSNPASDGMGWEDLFTAVNEEHDDGHAAKFIRALKNGEQECSKYEQGEWADYFPMKGDMWLKLARMCQDTTTNRPPDLKWVPFTGFDQPWKRPDLAN.

It belongs to the AflY oxidoreductase family.

It participates in secondary metabolite biosynthesis. Functionally, baeyer-Villiger monooxygenase; part of the gene cluster that mediates the biosynthesis of the dimeric xanthones cryptosporioptides. The pathway begins with the synthesis of atrochrysone thioester by the polyketide synthase dmx-nrPKS. The atrochrysone carboxyl ACP thioesterase dmxR1 then breaks the thioester bond and releases the atrochrysone carboxylic acid from dmx-nrPKS. Atrochrysone carboxylic acid is decarboxylated by the decarboxylase dmxR15, and oxidized by the anthrone oxygenase dmxR16 to yield emodin. Emodin is then reduced to emodin hydroquinone by the oxidoreductase dmxR7. A-ring reduction by the short chain dehydrogenase dmxR18, dehydration by the scytalone dehydratase-like protein dmxR17 and probable spontaneous re-oxidation, results in overall deoxygenation to chrysophanol. Baeyer-Villiger oxidation by the Baeyer-Villiger monooxygenase (BVMO) dmxR6 then yields monodictylactone in equilibrium with monodictyphenone. In the case of the cryptosporioptides biosynthesis, monodictylactone is reduced at C-12 to an alcohol (by the short chain dehydrogenases dmxR12 or dmxR8) and hydroxylated at C-5 by dmxR9, yielding the electron-rich aromatic which could eliminate H(2)O to form the ortho-quinonemethide, followed by tautomerisation to paraquinone and complete the formal reduction to produce the 10-methylgroup. Conjugate addition of C-4a-OH to the resulting paraquinone by the monooxygenase dmxR10 then gives cyclohexadienone, which is then reduced at C-5 by the short chain dehydrogenase dmxR3 to give the dihydroxanthone. The 6,7-epoxide in the cryptosporioptides could be introduced by the cytochrome P450 monooxygenase dmxL3. The highly reducing PKS dmxL2 manufactures butyrate, which is further carboxylated by dmxL1 to form ethylmalonate. It is not yet clear whether the carboxylation occurs while the butyrate is attached to the ACP of dmxL2, but this unusual fungal metabolite could then be esterified to O-5 by the O-acetyltransferase dmxR13. Finally, dimerization performed by dmxR5 gives the observed dimers cryptosporioptides A, B and C as the final products of the pathway. This chain is Baeyer-Villiger monooxygenase dmxR6, found in Cryptosporiopsis sp. (strain 8999).